A 496-amino-acid polypeptide reads, in one-letter code: Cytochrome P450 71D95 (496 aa).

A helical; Signal-anchor membrane pass occupies residues 2-22 (ELQISSAIIILVATFVASLLI). Residue Cys436 coordinates heme.

It belongs to the cytochrome P450 family. Heme is required as a cofactor.

It localises to the endoplasmic reticulum membrane. It catalyses the reaction (4S)-limonene + reduced [NADPH--hemoprotein reductase] + O2 = (1S,6R)-isopiperitenol + oxidized [NADPH--hemoprotein reductase] + H2O + H(+). Hydroxylates both (+)- and (-)-limonene to (+) and (-)-trans-isopiperitenol. The protein is Cytochrome P450 71D95 (CYP71D95) of Mentha spicata (Spearmint).